Reading from the N-terminus, the 40-residue chain is Dermonecrotic toxin LgSicTox-alphaI-1 (40 aa).

Residues Glu-32 and Asp-34 each contribute to the Mg(2+) site.

The protein belongs to the arthropod phospholipase D family. Class II subfamily. The cofactor is Mg(2+). Contains 2 disulfide bonds. In terms of tissue distribution, expressed by the venom gland.

The protein resides in the secreted. It catalyses the reaction an N-(acyl)-sphingosylphosphocholine = an N-(acyl)-sphingosyl-1,3-cyclic phosphate + choline. The catalysed reaction is an N-(acyl)-sphingosylphosphoethanolamine = an N-(acyl)-sphingosyl-1,3-cyclic phosphate + ethanolamine. It carries out the reaction a 1-acyl-sn-glycero-3-phosphocholine = a 1-acyl-sn-glycero-2,3-cyclic phosphate + choline. The enzyme catalyses a 1-acyl-sn-glycero-3-phosphoethanolamine = a 1-acyl-sn-glycero-2,3-cyclic phosphate + ethanolamine. Functionally, dermonecrotic toxins cleave the phosphodiester linkage between the phosphate and headgroup of certain phospholipids (sphingolipid and lysolipid substrates), forming an alcohol (often choline) and a cyclic phosphate. This toxin acts on sphingomyelin (SM). It may also act on ceramide phosphoethanolamine (CPE), lysophosphatidylcholine (LPC) and lysophosphatidylethanolamine (LPE), but not on lysophosphatidylserine (LPS), and lysophosphatidylglycerol (LPG). It acts by transphosphatidylation, releasing exclusively cyclic phosphate products as second products. In vivo, intradermal injection induces dermonecrosis. Induces, hemolysis, vascular permeability, edema, inflammatory response, and platelet aggregation. This chain is Dermonecrotic toxin LgSicTox-alphaI-1, found in Loxosceles gaucho (Spider).